Reading from the N-terminus, the 320-residue chain is Malate dehydrogenase (320 aa).

Residues 10–15 (GSGMIG) and D34 each bind NAD(+). Substrate-binding residues include R83 and R89. NAD(+) is bound by residues N96 and 119-121 (ITN). 2 residues coordinate substrate: N121 and R152. H176 functions as the Proton acceptor in the catalytic mechanism.

Belongs to the LDH/MDH superfamily. MDH type 3 family.

The catalysed reaction is (S)-malate + NAD(+) = oxaloacetate + NADH + H(+). In terms of biological role, catalyzes the reversible oxidation of malate to oxaloacetate. This chain is Malate dehydrogenase, found in Bartonella tribocorum (strain CIP 105476 / IBS 506).